The chain runs to 161 residues: Allophycocyanin beta chain (161 aa).

The residue at position 71 (Asn71) is an N4-methylasparagine. Cys81 is a binding site for (2R,3E)-phycocyanobilin.

Belongs to the phycobiliprotein family. In terms of assembly, heterodimer of an alpha and a beta chain. In terms of processing, contains one covalently linked phycocyanobilin chromophore.

The protein resides in the plastid. It localises to the chloroplast thylakoid membrane. Light-harvesting photosynthetic bile pigment-protein from the phycobiliprotein complex. Allophycocyanin has a maximum absorption at approximately 650 nanometers. This chain is Allophycocyanin beta chain (apcB), found in Aglaothamnion neglectum (Red alga).